Reading from the N-terminus, the 490-residue chain is Cytochrome P450 2C28 (490 aa).

S127 is subject to Phosphoserine. Residues K249 and K375 each carry the N6-acetyllysine modification. C435 contacts heme.

It belongs to the cytochrome P450 family. Heme is required as a cofactor. As to expression, liver.

The protein localises to the endoplasmic reticulum membrane. The protein resides in the microsome membrane. It carries out the reaction an organic molecule + reduced [NADPH--hemoprotein reductase] + O2 = an alcohol + oxidized [NADPH--hemoprotein reductase] + H2O + H(+). Its function is as follows. Catalyzes the N-demethylation of aminopyrine and benzphetamine, but does not catalyze the hydroxylation of tolbutamide, testosterone, and progesterone. This chain is Cytochrome P450 2C28 (CYP2C28), found in Mesocricetus auratus (Golden hamster).